Reading from the N-terminus, the 632-residue chain is Threonine--tRNA ligase (632 aa).

A TGS domain is found at 1–61 (MPIVTLPDGS…EHDAEVSILT (61 aa)). Residues 242 to 533 (DHRKLARKLD…LIEHYAGSMP (292 aa)) form a catalytic region. The Zn(2+) site is built by Cys-333, His-384, and His-510.

This sequence belongs to the class-II aminoacyl-tRNA synthetase family. In terms of assembly, homodimer. Requires Zn(2+) as cofactor.

Its subcellular location is the cytoplasm. It catalyses the reaction tRNA(Thr) + L-threonine + ATP = L-threonyl-tRNA(Thr) + AMP + diphosphate + H(+). In terms of biological role, catalyzes the attachment of threonine to tRNA(Thr) in a two-step reaction: L-threonine is first activated by ATP to form Thr-AMP and then transferred to the acceptor end of tRNA(Thr). Also edits incorrectly charged L-seryl-tRNA(Thr). This is Threonine--tRNA ligase from Chromohalobacter salexigens (strain ATCC BAA-138 / DSM 3043 / CIP 106854 / NCIMB 13768 / 1H11).